The following is a 146-amino-acid chain: Snake venom vascular endothelial growth factor toxin (146 aa).

Residues 1–24 (MAAYLLAVAILFCIQGWPLGTVQG) form the signal peptide. Pyrrolidone carboxylic acid is present on Gln25. Intrachain disulfides connect Cys38-Cys80, Cys69-Cys115, and Cys73-Cys117. Positions 119-146 (PRSASGVNSRKHKRNPEEGEPRAKFPFV) are disordered. Residues 133–146 (NPEEGEPRAKFPFV) are compositionally biased toward basic and acidic residues.

It belongs to the PDGF/VEGF growth factor family. Snake venom VEGF subfamily. As to quaternary structure, homodimer; disulfide-linked. Interacts with VEGF receptor-1 (FLT1) with a high affinity, whereas it binds to VEGF receptor-2 (KDR) with a low affinity. Does not bind VEGF receptor-3 (FLT4). Expressed by the venom gland.

It localises to the secreted. Functionally, snake venom VEGFs may contribute to venom dispersion and prey subjugation by inducing vascular permeability and hypotension. This protein induces vascular permeability probably through VEGF (VEGFR) signaling. This protein also induces a drastic hypotensive effect after intravenous injection. The hypotension is mediated by nitric oxide (NO), which is produced by VEGF-activated endothelium NO synthase. Also induces angiogenesis in vitro. Like other crotalid VEGFs, this protein interacts with VEGF receptor-1 (FLT1) with a high affinity, whereas it binds to VEGF receptor-2 (KDR) with a low affinity. The chain is Snake venom vascular endothelial growth factor toxin from Bothrops insularis (Golden lancehead).